A 302-amino-acid chain; its full sequence is Sulfate adenylyltransferase subunit 2 (302 aa).

This sequence belongs to the PAPS reductase family. CysD subfamily. As to quaternary structure, heterodimer composed of CysD, the smaller subunit, and CysN.

The enzyme catalyses sulfate + ATP + H(+) = adenosine 5'-phosphosulfate + diphosphate. Its pathway is sulfur metabolism; hydrogen sulfide biosynthesis; sulfite from sulfate: step 1/3. With CysN forms the ATP sulfurylase (ATPS) that catalyzes the adenylation of sulfate producing adenosine 5'-phosphosulfate (APS) and diphosphate, the first enzymatic step in sulfur assimilation pathway. APS synthesis involves the formation of a high-energy phosphoric-sulfuric acid anhydride bond driven by GTP hydrolysis by CysN coupled to ATP hydrolysis by CysD. In Escherichia coli O7:K1 (strain IAI39 / ExPEC), this protein is Sulfate adenylyltransferase subunit 2.